The chain runs to 246 residues: 1-(5-phosphoribosyl)-5-[(5-phosphoribosylamino)methylideneamino] imidazole-4-carboxamide isomerase (246 aa).

Catalysis depends on D8, which acts as the Proton acceptor. D131 serves as the catalytic Proton donor.

This sequence belongs to the HisA/HisF family.

It localises to the cytoplasm. It catalyses the reaction 1-(5-phospho-beta-D-ribosyl)-5-[(5-phospho-beta-D-ribosylamino)methylideneamino]imidazole-4-carboxamide = 5-[(5-phospho-1-deoxy-D-ribulos-1-ylimino)methylamino]-1-(5-phospho-beta-D-ribosyl)imidazole-4-carboxamide. It functions in the pathway amino-acid biosynthesis; L-histidine biosynthesis; L-histidine from 5-phospho-alpha-D-ribose 1-diphosphate: step 4/9. The protein is 1-(5-phosphoribosyl)-5-[(5-phosphoribosylamino)methylideneamino] imidazole-4-carboxamide isomerase of Albidiferax ferrireducens (strain ATCC BAA-621 / DSM 15236 / T118) (Rhodoferax ferrireducens).